The primary structure comprises 234 residues: Triggering receptor expressed on myeloid cells 1 (234 aa).

An N-terminal signal peptide occupies residues 1 to 20 (MRKTRLWGLLWMLFVSELRA). At 21–205 (ATKLTEEKYE…TDIIRVPVFN (185 aa)) the chain is on the extracellular side. An Ig-like V-type domain is found at 26 to 134 (EEKYELKEGQ…LFDRIRLVVT (109 aa)). Residues C41 and C113 are joined by a disulfide bond. Residues N146, N191, and N194 are each glycosylated (N-linked (GlcNAc...) asparagine). A helical transmembrane segment spans residues 206-226 (IVILLAGGFLSKSLVFSVLFA). Topologically, residues 227-234 (VTLRSFVP) are cytoplasmic.

Monomer. Homomultimer; when activated. Interacts with TYROBP/DAP12. Interacts with TLR4. In terms of processing, glycosylated. Mostly expressed by immune cells of the myeloid lineage, such as monocytes, macrophages, neutrophils and dendritic cells. Expression is associated with a mature stage of myeloid development. Highly expressed in adult liver, lung and spleen than in corresponding fetal tissue. Also expressed in the lymph node, placenta, spinal cord and heart tissues. Isoform 2 was detected in the lung, liver and mature monocytes.

The protein localises to the cell membrane. It localises to the secreted. Its function is as follows. Cell surface receptor that plays important roles in innate and adaptive immunity by amplifying inflammatory responses. Upon activation by various ligands such as PGLYRP1, HMGB1 or HSP70, multimerizes and forms a complex with transmembrane adapter TYROBP/DAP12. In turn, initiates a SYK-mediated cascade of tyrosine phosphorylation, activating multiple downstream mediators such as BTK, MAPK1, MAPK3 or phospholipase C-gamma. This cascade promotes the neutrophil- and macrophage-mediated release of pro-inflammatory cytokines and/or chemokines, as well as their migration and thereby amplifies inflammatory responses that are triggered by bacterial and fungal infections. By also promoting the amplification of inflammatory signals that are initially triggered by Toll-like receptor (TLR) and NOD-like receptor engagement, plays a major role in the pathophysiology of acute and chronic inflammatory diseases of different etiologies including septic shock and atherosclerosis. Acts as a decoy receptor, counterbalancing TREM1 pro-inflammatory activity through the neutralization of its ligand. The sequence is that of Triggering receptor expressed on myeloid cells 1 (TREM1) from Homo sapiens (Human).